A 475-amino-acid chain; its full sequence is Probable sensor histidine kinase TcrY (475 aa).

The Extracellular portion of the chain corresponds to 1-153 (MGITAATEMA…NVDATMLQML (153 aa)). A helical membrane pass occupies residues 154–174 (IIFGIVTVIALVAATTAGIVI). The Cytoplasmic segment spans residues 175 to 475 (IKRALAPLRR…GWQPLESSPR (301 aa)). The 63-residue stretch at 176–238 (KRALAPLRRV…MLDHIAAALS (63 aa)) folds into the HAMP domain. In terms of domain architecture, Histidine kinase spans 253–466 (DASHELRTPL…EFAVRLPLDG (214 aa)). H256 is modified (phosphohistidine; by autocatalysis).

Homodimer. A divalent metal cation is required as a cofactor. In terms of processing, autophosphorylated.

It localises to the cell membrane. The catalysed reaction is ATP + protein L-histidine = ADP + protein N-phospho-L-histidine.. Its function is as follows. Member of the two-component regulatory system TcrY/TcrX. Activates TcrX by phosphorylation. In Mycobacterium tuberculosis (strain ATCC 25618 / H37Rv), this protein is Probable sensor histidine kinase TcrY (tcrY).